The primary structure comprises 484 residues: MTATATEHVAATSGATGRIARVIGPVVDVEFPADAIPSIYNALTTEITLNGETKTITFEVALHLGDNLIRAISLQATDGLVRGTNVVDTGSPITVPVGDGVKGHIFNVLGKPLDVDESEIQASDHWAIHRKAPAFATLEGSTEMLETGIKVIDLLTPYIKGGKIGLFGGAGVGKTVLIQEMITRVARNFGGTSVFAGVGERTREGNDLWVEMEEAGVLKDTALVFGQMDEPPGTRLRVALSALTMAEYFRDVQNQDVLLFIDNIFRFTQAGSEVSTLLGRMPSAVGYQPNLADEMGLLQERITSTKGHSITSMQAIYVPADDYTDPAPATTFAHLDATTELSREIASRGLYPAVDPLTSTSRILDPQYIGKDHYNTAVRVKQILQKNKELQDIIAILGVDELSEEDKIVVSRARRIQQFLSQNTYTAKQFTGVEGSTVSIKDTVEGFTAICDGELDHVAEQAFFNVGGLDDVERQWAKIQEQTK.

Residue 168 to 175 (GGAGVGKT) participates in ATP binding.

This sequence belongs to the ATPase alpha/beta chains family. In terms of assembly, F-type ATPases have 2 components, CF(1) - the catalytic core - and CF(0) - the membrane proton channel. CF(1) has five subunits: alpha(3), beta(3), gamma(1), delta(1), epsilon(1). CF(0) has three main subunits: a(1), b(2) and c(9-12). The alpha and beta chains form an alternating ring which encloses part of the gamma chain. CF(1) is attached to CF(0) by a central stalk formed by the gamma and epsilon chains, while a peripheral stalk is formed by the delta and b chains.

Its subcellular location is the cell membrane. It carries out the reaction ATP + H2O + 4 H(+)(in) = ADP + phosphate + 5 H(+)(out). Produces ATP from ADP in the presence of a proton gradient across the membrane. The catalytic sites are hosted primarily by the beta subunits. The protein is ATP synthase subunit beta of Arthrobacter sp. (strain FB24).